A 199-amino-acid chain; its full sequence is RNA-binding protein, mRNA-processing factor 2a (199 aa).

In terms of domain architecture, RRM spans 20-97 (RTLFVSGLPV…QTLRLEFAKA (78 aa)).

Interacts with Bucky ball (BUC); to mediate Balbiani body formation and oocyte polarity during early oogenesis.

Its subcellular location is the cytoplasm. It is found in the nucleus. The protein resides in the stress granule. Its function is as follows. RNA-binding protein involved in the regulation of smooth muscle cell differentiation and proliferation in the gastrointestinal system. RNA-binding protein localized in Balbiani body (electron-dense aggregates in the oocyte) and germ plasm during oogenesis, and may be required to maintain germ plasm mRNA translational repression. Translational regulator during topographic map formation in the visual system. Establishes oocyte polarity through interaction with Bucky ball (BUC). Acts as a pre-mRNA alternative splicing regulator. Mediates ACTN1 and FLNB alternative splicing. Likely binds to mRNA tandem CAC trinucleotide or CA dinucleotide motifs. The sequence is that of RNA-binding protein, mRNA-processing factor 2a from Danio rerio (Zebrafish).